The chain runs to 292 residues: Acetylglutamate kinase (292 aa).

Residues 62–63, Arg84, and Asn188 each bind substrate; that span reads GG.

Belongs to the acetylglutamate kinase family. ArgB subfamily.

Its subcellular location is the cytoplasm. The catalysed reaction is N-acetyl-L-glutamate + ATP = N-acetyl-L-glutamyl 5-phosphate + ADP. Its pathway is amino-acid biosynthesis; L-arginine biosynthesis; N(2)-acetyl-L-ornithine from L-glutamate: step 2/4. In terms of biological role, catalyzes the ATP-dependent phosphorylation of N-acetyl-L-glutamate. The protein is Acetylglutamate kinase of Methanosarcina mazei (strain ATCC BAA-159 / DSM 3647 / Goe1 / Go1 / JCM 11833 / OCM 88) (Methanosarcina frisia).